The following is a 444-amino-acid chain: GTPase Der (444 aa).

EngA-type G domains follow at residues 3-167 (PIVA…PEAE) and 180-353 (LRLA…AECQ). Residues 9–16 (GRPNVGKS), 56–60 (DTGGM), 119–122 (NKVD), 186–193 (GRPNAGKS), 233–237 (DTAGV), and 298–301 (NKTD) contribute to the GTP site. Residues 354 to 438 (IRIGTGELNR…PVKVVCRASH (85 aa)) form the KH-like domain.

Belongs to the TRAFAC class TrmE-Era-EngA-EngB-Septin-like GTPase superfamily. EngA (Der) GTPase family. Associates with the 50S ribosomal subunit.

Its function is as follows. GTPase that plays an essential role in the late steps of ribosome biogenesis. This chain is GTPase Der, found in Solidesulfovibrio magneticus (strain ATCC 700980 / DSM 13731 / RS-1) (Desulfovibrio magneticus).